The chain runs to 119 residues: Large ribosomal subunit protein bL20 (119 aa).

This sequence belongs to the bacterial ribosomal protein bL20 family.

Functionally, binds directly to 23S ribosomal RNA and is necessary for the in vitro assembly process of the 50S ribosomal subunit. It is not involved in the protein synthesizing functions of that subunit. This chain is Large ribosomal subunit protein bL20, found in Acidithiobacillus ferrooxidans (strain ATCC 23270 / DSM 14882 / CIP 104768 / NCIMB 8455) (Ferrobacillus ferrooxidans (strain ATCC 23270)).